Reading from the N-terminus, the 189-residue chain is Ribosome maturation factor RimM (189 aa).

The PRC barrel domain maps to 110 to 189 (DDEYYWKDLI…TVTVDWDPNF (80 aa)).

Belongs to the RimM family. As to quaternary structure, binds ribosomal protein uS19.

It localises to the cytoplasm. Its function is as follows. An accessory protein needed during the final step in the assembly of 30S ribosomal subunit, possibly for assembly of the head region. Essential for efficient processing of 16S rRNA. May be needed both before and after RbfA during the maturation of 16S rRNA. It has affinity for free ribosomal 30S subunits but not for 70S ribosomes. In Blochmanniella pennsylvanica (strain BPEN), this protein is Ribosome maturation factor RimM.